The primary structure comprises 313 residues: D-alanine--D-alanine ligase (313 aa).

In terms of domain architecture, ATP-grasp spans 107-303; it reads KQAFAAAGLT…FEALVEQIAC (197 aa). An ATP-binding site is contributed by 135-188; it reads PFGLPVVVKPVQEGSSVGVTIVKKPEDLQAALDEAFRYDTLVLVEKYIKGQEVQ. Positions 256, 269, and 271 each coordinate Mg(2+).

Belongs to the D-alanine--D-alanine ligase family. It depends on Mg(2+) as a cofactor. Mn(2+) serves as cofactor.

Its subcellular location is the cytoplasm. It carries out the reaction 2 D-alanine + ATP = D-alanyl-D-alanine + ADP + phosphate + H(+). It functions in the pathway cell wall biogenesis; peptidoglycan biosynthesis. Its function is as follows. Cell wall formation. This Trichlorobacter lovleyi (strain ATCC BAA-1151 / DSM 17278 / SZ) (Geobacter lovleyi) protein is D-alanine--D-alanine ligase.